Here is a 359-residue protein sequence, read N- to C-terminus: Alanine racemase, biosynthetic (359 aa).

The active-site Proton acceptor; specific for D-alanine is the Lys34. Lys34 bears the N6-(pyridoxal phosphate)lysine mark. At Lys122 the chain carries N6-carboxylysine. Arg129 contacts substrate. Residue Tyr255 is the Proton acceptor; specific for L-alanine of the active site. Met303 lines the substrate pocket.

Belongs to the alanine racemase family. In terms of assembly, homodimer. It depends on pyridoxal 5'-phosphate as a cofactor.

It catalyses the reaction L-alanine = D-alanine. It functions in the pathway amino-acid biosynthesis; D-alanine biosynthesis; D-alanine from L-alanine: step 1/1. Its pathway is cell wall biogenesis; peptidoglycan biosynthesis. Its function is as follows. Catalyzes the interconversion of L-alanine and D-alanine. Provides the D-alanine required for cell wall biosynthesis. In Escherichia coli (strain K12), this protein is Alanine racemase, biosynthetic.